Here is a 231-residue protein sequence, read N- to C-terminus: Transmembrane gamma-carboxyglutamic acid protein 3 (231 aa).

Positions 1–19 are excised as a propeptide; the sequence is MAVFLEAKDAHSVLKRFPR. A Gla domain is found at 20 to 65; sequence ANEFLEELRQGTIERECMEEICSYEEVKEVFENKEKTMEFWKGYPN. The Extracellular portion of the chain corresponds to 20–78; that stretch reads ANEFLEELRQGTIERECMEEICSYEEVKEVFENKEKTMEFWKGYPNAVYSVRDPSQSSD. 13 positions are modified to 4-carboxyglutamate: E22, E25, E26, E33, E35, E38, E39, E44, E45, E48, E51, E54, and E58. A disulfide bridge connects residues C36 and C41. The chain crosses the membrane as a helical span at residues 79–101; that stretch reads AMYVVVPLLGVALLIVIALFIIW. Residues 102-231 lie on the Cytoplasmic side of the membrane; sequence RCQLQKATRH…IVAANPGADK (130 aa). Disordered regions lie at residues 140–165 and 182–231; these read HSQG…SRGG and LSRL…GADK. Residues 202–213 are compositionally biased toward low complexity; sequence ESSSEEASVSYS.

In terms of processing, gla residues are produced after subsequent post-translational modifications of glutamate by a vitamin K-dependent gamma-carboxylase. Expressed in brain, lung, kidney and heart.

It is found in the membrane. This chain is Transmembrane gamma-carboxyglutamic acid protein 3 (PRRG3), found in Homo sapiens (Human).